The primary structure comprises 720 residues: Engulfment and cell motility protein 2 (720 aa).

Phosphotyrosine is present on Y48. In terms of domain architecture, ELMO spans Q310 to A484. The residue at position 503 (S503) is a Phosphoserine. One can recognise a PH domain in the interval S553–L674. Residues P700–P707 carry the SH3-binding motif. Y717 carries the phosphotyrosine modification.

Interacts directly with the SH3-domain of DOCK1 via its SH3-binding site. Probably forms a heterotrimeric complex with DOCK1 and RAC1. Interacts with ARHGEF16, DOCK4 and EPHA2; mediates activation of RAC1 by EPHA2. Interacts with ADGRB3. Interacts with AUTS2; the interaction is direct.

It is found in the cytoplasm. It localises to the cytosol. The protein localises to the membrane. Its function is as follows. Involved in cytoskeletal rearrangements required for phagocytosis of apoptotic cells and cell motility. Acts in association with DOCK1 and CRK. Was initially proposed to be required in complex with DOCK1 to activate Rac Rho small GTPases. May enhance the guanine nucleotide exchange factor (GEF) activity of DOCK1. This is Engulfment and cell motility protein 2 (ELMO2) from Bos taurus (Bovine).